Here is a 409-residue protein sequence, read N- to C-terminus: MEEGGSTGSAGSDSSTSGSGGAQQRELERMAEVLVTGEQLRLRLHEEKVIKDRRHHLKTYPNCFVAKELIDWLIEHKEASDRETAIKLMQKLADRGIIHHVCDEHKEFKDVKLFYRFRKDDGTFPLDNEVKAFMRGQRLYEKLMSPENTLLQPREEEGVKYERTFMASEFLDWLVQEGEATTRKEAEQLCHRLMEHGIIQHVSNKHPFVDSNLLYQFRMNFRRRRRLMELLNEKSPSSQETHDSPFCLRKQSHDNRKSTSFMSVSPSKEIKIVSAVRRSSMSSCGSSGYFSSSPTLSSSPPVLCNPKSVLKRPVTSEELLTPGAPYARKTFTIVGDAVGWGFVVRGSKPCHIQAVDPSGPAAAAGMKVCQFVVSVNGLNVLHVDYRTVSNLILTGPRTIVMEVMEELEC.

Met-1 is subject to N-acetylmethionine. The disordered stretch occupies residues 1 to 25 (MEEGGSTGSAGSDSSTSGSGGAQQR). 2 consecutive DEP domains span residues 36–119 (TGEQ…RFRK) and 145–219 (SPEN…QFRM). Positions 217–235 (FRMNFRRRRRLMELLNEKS) match the DDEX motif motif. Ser-235 is subject to Phosphoserine; by MAPK3. Phosphothreonine is present on Thr-241. A phosphoserine mark is found at Ser-244 and Ser-258. Phosphothreonine is present on Thr-259. Residues Ser-263, Ser-265, Ser-280, Ser-282, and Ser-283 each carry the phosphoserine modification. 2 positions are modified to phosphoserine; by CK1: Ser-286 and Ser-287. The BetaTrCP degron motif motif lies at 286 to 291 (SSGYFS). Tyr-289 is subject to Phosphotyrosine; by SYK. Position 291 is a phosphoserine; by CK1 (Ser-291). Residue Ser-293 is modified to Phosphoserine; by MTOR. A Phosphothreonine; by MTOR modification is found at Thr-295. A phosphoserine mark is found at Ser-297 and Ser-298. A Phosphoserine; by MTOR modification is found at Ser-299. In terms of domain architecture, PDZ spans 330 to 407 (TFTIVGDAVG…TIVMEVMEEL (78 aa)).

As to quaternary structure, associated component of the mechanistic target of rapamycin complex 1 (mTORC1) which contains MTOR, MLST8 and RPTOR. Associated component of the mechanistic target of rapamycin complex 2 (mTORC2) which contains MTOR, MLST8, PROTOR1, RICTOR, MAPKAP1 and DEPTOR. Interacts (via PDZ domain) with MTOR; interacts with MTOR within both mTORC1 and mTORC2. Interacts (via PDZ domain) with MINAR1 (via N-terminus). Interacts with SIK3. In terms of processing, phosphorylation weakens interaction with MTOR within mTORC1 and mTORC2. Phosphorylated at Ser-286, Ser-287 and Ser-291 in response to mitogenic stimulation by MTOR: DEPTOR is either directly phosphorylated by MTOR or indirectly via proteins kinases that are activated by MTOR, such as CK1/CSNK1A1. Phosphorylation at Ser-286, Ser-287 and Ser-291 promotes ubiquitination by the SCF(BTRC) complex, followed by degradation. Phosphorylation at Ser-235 by MAPK3/ERK1 promotes deubiquitination by USP7, enhancing its stability. Phosphorylation at Tyr-289 by SYK impairs its interaction with MTOR, promoting mTORC1 and mTORC2 signaling. Post-translationally, ubiquitinated; leading to proteasomal degradation. Ubiquitination by the SCF(BTRC) and SCF(FBXW11) complexes following phosphorylation at Ser-286, Ser-287 and Ser-291 by MTOR, leads to its degradation by the proteasome. Deubiquitinated by OTUB1 in response to amino acid via a non-canonical mechanism, leading to DEPTOR stability. Deubiquitinated by USP7 following phosphorylation at Ser-235, promoting its stability.

Its subcellular location is the lysosome membrane. With respect to regulation, inhibited upon phosphatidic acid-binding: phosphatidic acid produced upon mitogenic stimulation promotes DEPTOR dissociatiom from the mTORC1 and mTORC2 complexes, leading to their activation. Specifically binds unsaturated phosphatidic acid, such as 16:0-18:1, 18:0-18:1 and di-18:1. Inhibited when nutrients are present via a feedback loop: phosphorylation by MTOR promotes DEPTOR ubiquitination and degradation. Its function is as follows. Negative regulator of the mTORC1 and mTORC2 complexes: inhibits the protein kinase activity of MTOR, thereby inactivating both complexes. DEPTOR inhibits mTORC1 and mTORC2 to induce autophagy. In contrast to AKT1S1/PRAS40, only partially inhibits mTORC1 activity. This chain is DEP domain-containing mTOR-interacting protein, found in Homo sapiens (Human).